Here is a 186-residue protein sequence, read N- to C-terminus: HTH-type transcriptional regulator Hpr (186 aa).

The HTH marR-type domain occupies 13 to 157; sequence AMLYSQRIAQ…VMAVIRNIYG (145 aa). The segment at residues 63–86 is a DNA-binding region (H-T-H motif); sequence ISDVAKFGVMHVSTAFNFSKKLEE.

As to quaternary structure, homodimer.

Functionally, negative regulator of protease production and sporulation. In Lysinibacillus sphaericus (strain C3-41), this protein is HTH-type transcriptional regulator Hpr.